The sequence spans 122 residues: Large ribosomal subunit protein uL14 (122 aa).

It belongs to the universal ribosomal protein uL14 family. As to quaternary structure, part of the 50S ribosomal subunit. Forms a cluster with proteins L3 and L19. In the 70S ribosome, L14 and L19 interact and together make contacts with the 16S rRNA in bridges B5 and B8.

Functionally, binds to 23S rRNA. Forms part of two intersubunit bridges in the 70S ribosome. The chain is Large ribosomal subunit protein uL14 from Rickettsia canadensis (strain McKiel).